We begin with the raw amino-acid sequence, 254 residues long: Kallikrein-4 (254 aa).

Positions 1 to 26 are cleaved as a signal peptide; the sequence is MATAGNPWGWFLGYLILGVAGSLVSG. The propeptide occupies 27–30; it reads SCSQ. A Peptidase S1 domain is found at 31–252; that stretch reads IINGEDCSPH…FTEWIEKTVQ (222 aa). 6 disulfide bridges follow: cysteine 37–cysteine 167, cysteine 56–cysteine 72, cysteine 141–cysteine 241, cysteine 148–cysteine 213, cysteine 178–cysteine 192, and cysteine 203–cysteine 228. Histidine 40 lines the Zn(2+) pocket. Histidine 71 functions as the Charge relay system in the catalytic mechanism. Glutamate 91 is a binding site for Zn(2+). Aspartate 116 serves as the catalytic Charge relay system. Residue asparagine 169 is glycosylated (N-linked (GlcNAc...) asparagine). Serine 207 (charge relay system) is an active-site residue.

The protein belongs to the peptidase S1 family. Kallikrein subfamily. N-glycosylated. The N-glycan structures are of complex diantennary or triantennary type, which may be further modified with up to 2 sialic acid residues. In terms of tissue distribution, expressed in prostate.

It is found in the secreted. Functionally, has a major role in enamel formation. Required during the maturation stage of tooth development for clearance of enamel proteins and normal structural patterning of the crystalline matrix. In Homo sapiens (Human), this protein is Kallikrein-4 (KLK4).